Here is a 557-residue protein sequence, read N- to C-terminus: Urocanate hydratase (557 aa).

Positions 1-20 (MSNPRHNEREVRSPRGDELN) are disordered. NAD(+) contacts are provided by residues 52–53 (GG), glutamine 130, 176–178 (GMG), glutamate 196, arginine 201, 242–243 (NA), 263–267 (QTSAH), 273–274 (YL), and tyrosine 322. Cysteine 410 is an active-site residue. Position 492 (glycine 492) interacts with NAD(+).

This sequence belongs to the urocanase family. NAD(+) is required as a cofactor.

The protein localises to the cytoplasm. The enzyme catalyses 4-imidazolone-5-propanoate = trans-urocanate + H2O. The protein operates within amino-acid degradation; L-histidine degradation into L-glutamate; N-formimidoyl-L-glutamate from L-histidine: step 2/3. In terms of biological role, catalyzes the conversion of urocanate to 4-imidazolone-5-propionate. This chain is Urocanate hydratase, found in Brucella ovis (strain ATCC 25840 / 63/290 / NCTC 10512).